The sequence spans 272 residues: MNNKVHQGHFARKRFGQNFLTDQFVIDSIVSAIHPMPGEAVVEIGPGLGALTEPVGARMDRMTVIELDRDLAARLANHPQLKDKLTIHQQDAMTVNFAEMAEQAGQPLRVFGNLPYNISTPLMFHLFSYTQAIRDMHFMLQKEVVNRLVAGPNSKAYGRLTVMAQYYCNVIPVLEVPPTSFTPAPKVDSAVVRLVPHLVNPNPVGDVRMLSRITTQAFNQRRKTVRNSLGDLFTPEQLTELGIDPILRAENISVAQYCKLANWLSANPAPQQ.

S-adenosyl-L-methionine-binding residues include N18, L20, G45, E66, D91, and N113.

Belongs to the class I-like SAM-binding methyltransferase superfamily. rRNA adenine N(6)-methyltransferase family. RsmA subfamily.

Its subcellular location is the cytoplasm. It carries out the reaction adenosine(1518)/adenosine(1519) in 16S rRNA + 4 S-adenosyl-L-methionine = N(6)-dimethyladenosine(1518)/N(6)-dimethyladenosine(1519) in 16S rRNA + 4 S-adenosyl-L-homocysteine + 4 H(+). Its function is as follows. Specifically dimethylates two adjacent adenosines (A1518 and A1519) in the loop of a conserved hairpin near the 3'-end of 16S rRNA in the 30S particle. May play a critical role in biogenesis of 30S subunits. The chain is Ribosomal RNA small subunit methyltransferase A from Serratia proteamaculans (strain 568).